A 274-amino-acid polypeptide reads, in one-letter code: 2-dehydro-3-deoxyphosphooctonate aldolase (274 aa).

This sequence belongs to the KdsA family.

It is found in the cytoplasm. It catalyses the reaction D-arabinose 5-phosphate + phosphoenolpyruvate + H2O = 3-deoxy-alpha-D-manno-2-octulosonate-8-phosphate + phosphate. It functions in the pathway carbohydrate biosynthesis; 3-deoxy-D-manno-octulosonate biosynthesis; 3-deoxy-D-manno-octulosonate from D-ribulose 5-phosphate: step 2/3. The protein operates within bacterial outer membrane biogenesis; lipopolysaccharide biosynthesis. In Rickettsia rickettsii (strain Iowa), this protein is 2-dehydro-3-deoxyphosphooctonate aldolase.